The primary structure comprises 494 residues: uncharacterized protein (494 aa).

A 2Fe-2S ferredoxin-type domain is found at 4 to 82 (FTITVKKTEG…NMIIEPLEGF (79 aa)). 4 residues coordinate [2Fe-2S] cluster: Cys-46, Cys-51, Cys-54, and Cys-66. 2 4Fe-4S ferredoxin-type domains span residues 127–157 (DLKD…NYPG) and 178–208 (EKEA…IVHN). Residues Cys-137, Cys-140, Cys-143, Cys-147, Cys-189, Cys-192, Cys-195, and Cys-199 each contribute to the [4Fe-4S] cluster site.

This sequence belongs to the succinate dehydrogenase/fumarate reductase iron-sulfur protein family.

This is an uncharacterized protein from Methanococcus maripaludis (strain DSM 14266 / JCM 13030 / NBRC 101832 / S2 / LL).